A 27-amino-acid polypeptide reads, in one-letter code: Small ribosomal subunit protein bTHX (27 aa).

A compositionally biased stretch (basic residues) spans M1–I13. The interval M1–K27 is disordered.

It belongs to the bacterial ribosomal protein bTHX family. As to quaternary structure, part of the 30S ribosomal subunit.

Functionally, binds at the top of the head of the 30S subunit. It stabilizes a number of different RNA elements and thus is important for subunit structure. This is Small ribosomal subunit protein bTHX (rpsU) from Thermus aquaticus.